Here is a 178-residue protein sequence, read N- to C-terminus: Ribosome maturation factor RimM (178 aa).

The PRC barrel domain occupies 100–173; that stretch reads ADEYFIHQLY…QIVVRLLPGL (74 aa).

This sequence belongs to the RimM family. In terms of assembly, binds ribosomal protein uS19.

It localises to the cytoplasm. In terms of biological role, an accessory protein needed during the final step in the assembly of 30S ribosomal subunit, possibly for assembly of the head region. Essential for efficient processing of 16S rRNA. May be needed both before and after RbfA during the maturation of 16S rRNA. It has affinity for free ribosomal 30S subunits but not for 70S ribosomes. In Roseiflexus castenholzii (strain DSM 13941 / HLO8), this protein is Ribosome maturation factor RimM.